Reading from the N-terminus, the 424-residue chain is UPF0597 protein Sputw3181_2955 (424 aa).

This sequence belongs to the UPF0597 family.

In Shewanella sp. (strain W3-18-1), this protein is UPF0597 protein Sputw3181_2955.